A 1065-amino-acid chain; its full sequence is MVAYLNIHTAYDLLNSSLKIEDAVRLAVSENVDALAITDTNVLYGFPKFYDTCIANNIKPIFGMTIYVTNGLNNIETVVLAKDNYGLKDLYQLSSEIKMNALEHVSFELLKRFSNNMIIIFKNVADEHRDIVRVFDSHEDTYLDHRSVLVQGIKHVWIQDVCYQTRHDADTISALAAIRDNTKLDLIHDQEDFGAHFLTENEIHQLDVNPEYFTQADRIAQKCNAELKYHQSLLPQYQTPNDESAKKYLWRVLVTQLKKLELNYDVYLERLKYEYKVITNMGFEDYFLIVSDLIHYAKTNDVMVGPGRGSSAGSLVSYLLGITTIDPIKFNLLFERFLNPERVTMPDIDIDFEDTRREKVIQYVQEKYGELHVSGIVTFGHLLARAVARDVGRIMGFDEVTLNEISSLIPHKLGITLDEAYQIDDFKKFVHRNHRHERWFSICKKLEGLPRHTSTHAAGIIINDHPLYEYAPLTKGDTGLLTQWTMTEAERIGLLKIDFLGLRNLSIIHQILTQVKKDLGINIDIEKIPFDDQKVFELLSQGDTTGIFQLESDGVRSVLKKLKPEHFEDIVAVTSLYRPGPMEEIPTYITRRHDPSKVQYLHPHLEPILKNTYGVIIYQEQIMQIASTFANFSYGEADILRRAMSKKNRAVLESERQHFIEGTKQNGYHEDISKQIFDLILKFADYGFPRAHAVSYSKIAYIMSFLKVHYPNYFYANILSNVIGSEKKTAQMIEEAKKQGITILPPNINESHWFYKPSQEGIYLSIGTIKGVGYQSVKVIVEERYQNGKFKDFFDFARRIPKRVKTRKLLEALILVGAFDAFGKTRSTLLQAIDQVLDGDLNIEQDGFLFDILTPKQMYEDKEELPDALISQYEKEYLGFYVSQHPVDKKFVAKQYLTIFKLSNAQNNKPILVQFDKVKQIRTKNGQNMAFVTLNDGIETLDGVIFPNQFKKYEELLSHNDLFIVSGKFDLRKQQRQLIINEIQTLATFEEQKLAFAKQIIIRNKSQIDMFEEMIKATKENANDVVLSFYDETIKQMTTLGYINQKDSMFNNFIQSFNPSDIRLI.

The protein belongs to the DNA polymerase type-C family. DnaE subfamily. In terms of assembly, DNA polymerase III contains a core (composed of alpha, epsilon and theta chains) that associates with a tau subunit. This core dimerizes to form the PolIII' complex. PolIII' associates with the gamma complex (composed of gamma, delta, delta', psi and chi chains) and with the beta chain to form the complete DNA polymerase III complex.

It localises to the cytoplasm. It catalyses the reaction DNA(n) + a 2'-deoxyribonucleoside 5'-triphosphate = DNA(n+1) + diphosphate. Functionally, DNA polymerase III is a complex, multichain enzyme responsible for most of the replicative synthesis in bacteria. This DNA polymerase also exhibits 3' to 5' exonuclease activity. The alpha chain is the DNA polymerase. The polypeptide is DNA polymerase III subunit alpha (dnaE) (Staphylococcus aureus (strain MRSA252)).